A 132-amino-acid chain; its full sequence is CLAVATA3/ESR (CLE)-related protein ESR2 (132 aa).

Positions 1 to 26 (MASRMGMVAIVSLFVCALVASTSVNA) are cleaved as a signal peptide. The tract at residues 68 to 132 (NRASKQLDSE…IGPPPFLDRY (65 aa)) is disordered. Hydroxyproline is present on residues proline 82 and proline 85. Proline 85 carries an O-linked (Ara...) hydroxyproline glycan. The span at 123 to 132 (IGPPPFLDRY) shows a compositional bias: pro residues.

It belongs to the CLV3/ESR signal peptide family. Post-translationally, the O-glycosylation (arabinosylation) of the hydroxyproline Pro-85 enhances binding affinity of the ESR2p peptide for its receptor. In terms of tissue distribution, seed endosperm.

It localises to the secreted. Its subcellular location is the extracellular space. Its function is as follows. Extracellular signal peptide that regulates cell fate. The chain is CLAVATA3/ESR (CLE)-related protein ESR2 from Zea mays (Maize).